The primary structure comprises 90 residues: MKVSVAALAVLLIAICYQTSAAPVGSDPPTSCCFTYISRQLPFSFVADYYETNSQCPHAGVVFITRKGREVCANPENDWVQDYMNKLELN.

Residues 1–21 (MKVSVAALAVLLIAICYQTSA) form the signal peptide. 2 disulfides stabilise this stretch: Cys-32-Cys-56 and Cys-33-Cys-72.

Belongs to the intercrine beta (chemokine CC) family. As to quaternary structure, homodimer.

It localises to the secreted. Functionally, monokine with inflammatory and chemokinetic properties. The chain is C-C motif chemokine 4 homolog (CCL4) from Gallus gallus (Chicken).